Consider the following 873-residue polypeptide: Potassium voltage-gated channel subfamily KQT member 3 (873 aa).

A disordered region spans residues Met1–Glu41. The Cytoplasmic segment spans residues Met1–Gly121. Residues Ala11 to Ala26 show a composition bias toward gly residues. At Thr82 the chain carries Phosphothreonine. A helical membrane pass occupies residues Trp122–Thr144. The Extracellular portion of the chain corresponds to Thr145–Gly154. The helical transmembrane segment at Asp155 to Ile176 threads the bilayer. The Cytoplasmic segment spans residues Trp177 to Phe194. A helical transmembrane segment spans residues Ala195–Val214. Residues Ala215 to Ser226 are Extracellular-facing. The helical; Voltage-sensor transmembrane segment at Leu227–Gly245 threads the bilayer. An a 1,2-diacyl-sn-glycero-3-phospho-(1D-myo-inositol-4,5-bisphosphate)-binding site is contributed by Arg244. The Cytoplasmic portion of the chain corresponds to Gly246–Ala257. A helical transmembrane segment spans residues His258–Val283. Residue Lys260 coordinates a 1,2-diacyl-sn-glycero-3-phospho-(1D-myo-inositol-4,5-bisphosphate). At Glu284–Thr303 the chain is on the extracellular side. The segment at residues Tyr304 to Ala316 is an intramembrane region (pore-forming). The Selectivity filter signature appears at Thr317–Asp322. Over Thr317–Thr327 the chain is Extracellular. Residues Trp328–Ser354 traverse the membrane as a helical segment. At Gly355–Thr873 the chain is on the cytoplasmic side. A mediates interaction with calmodulin region spans residues Ala357–Thr538. Residue Lys367 participates in a 1,2-diacyl-sn-glycero-3-phospho-(1D-myo-inositol-4,5-bisphosphate) binding. Disordered stretches follow at residues Pro575–Glu603, Arg723–Tyr742, and Glu766–Thr873. 3 stretches are compositionally biased toward polar residues: residues Lys588–Arg601, Gly725–Thr741, and Asp844–Thr873.

The protein belongs to the potassium channel family. KQT (TC 1.A.1.15) subfamily. Kv7.3/KCNQ3 sub-subfamily. Heterotetramer with KCNQ2; forms heterotetrameric M-channel responsible for the native M-current. Interacts with calmodulin; the interaction is calcium-independent, constitutive and participates in the proper assembly of a functional M-channel. Heteromultimer with KCNQ5. May associate with KCNE2. Interacts with IQCJ-SCHIP1. Interacts (via the pore module) with SLC5A3/SMIT1; forms a coregulatory complex that alters ion selectivity, voltage dependence and gating kinetics of the channel. KCNQ2/KCNQ3 are ubiquitinated by NEDD4L. Ubiquitination leads to protein degradation. Degradation induced by NEDD4L is inhibited by USP36. Expressed in brain and sympathetic ganglia. In brain, expressed in cortex, hippocampus and at much lower levels in cerebellum. In sympathetic ganglia, expressed at approximately equal levels in both superior cervical ganglia and prevertebral ganglia.

The protein resides in the cell membrane. It catalyses the reaction K(+)(in) = K(+)(out). It carries out the reaction Rb(+)(in) = Rb(+)(out). The catalysed reaction is Cs(+)(in) = Cs(+)(out). The enzyme catalyses Na(+)(in) = Na(+)(out). With respect to regulation, phosphatidylinositol-4,5-bisphosphate (PIP2) potentiates the activation of KCNQ channels by enhancing the electro-mechanical coupling of the voltage-sensing domain (VSD) and the pore-forming domain (PD). In the closed state of the channel, PIP2 is anchored at the S2-S3 loop; upon channel activation, PIP2 interacts with the S4-S5 linker and is involved in channel gating. Calcium suppresses KCNQ2-KCNQ3 channel currents, with calcium-bound calmodulin inducing a change in channel configuration which leads to the reduction of channel affinity for PIP2 and subsequent current suppression. M-channel is blocked by XE991. In terms of biological role, pore-forming subunit of the voltage-gated potassium (Kv) M-channel which is responsible for the M-current, a key controller of neuronal excitability. M-channel is composed of pore-forming subunits KCNQ2 and KCNQ3 assembled as heterotetramers, each subunit containing a voltage sensing domain (VSD) and a pore-forming domain (PD). The native M-current has a slowly activating and deactivating potassium conductance which plays a critical role in determining the subthreshold electrical excitability of neurons as well as the responsiveness to synaptic inputs. M-channel is selectively permeable in vitro to other cations besides potassium, in decreasing order of affinity K(+) &gt; Rb(+) &gt; Cs(+) &gt; Na(+). M-channel association with SLC5A3/SMIT1 alters channel ion selectivity, increasing Na(+) and Cs(+) permeation relative to K(+). Suppressed by activation of M1 muscarinic acetylcholine receptors. KCNQ3 also associates with KCNQ5 to form a functional channel in vitro and may also contribute to the M-current in brain. The protein is Potassium voltage-gated channel subfamily KQT member 3 of Rattus norvegicus (Rat).